The sequence spans 108 residues: Class I hydrophobin 3 (108 aa).

An N-terminal signal peptide occupies residues 1–17 (MFSRVFAVASLAALALA). 4 cysteine pairs are disulfide-bonded: C26-C87, C33-C81, C34-C67, and C88-C101.

This sequence belongs to the fungal hydrophobin family. In terms of assembly, self-assembles to form functional amyloid fibrils called rodlets. Self-assembly into fibrillar rodlets occurs spontaneously at hydrophobic:hydrophilic interfaces and the rodlets further associate laterally to form amphipathic monolayers.

It localises to the secreted. The protein resides in the cell wall. In terms of biological role, aerial growth, conidiation, and dispersal of filamentous fungi in the environment rely upon a capability of their secreting small amphipathic proteins called hydrophobins (HPBs) with low sequence identity. Class I can self-assemble into an outermost layer of rodlet bundles on aerial cell surfaces, conferring cellular hydrophobicity that supports fungal growth, development and dispersal; whereas Class II form highly ordered films at water-air interfaces through intermolecular interactions but contribute nothing to the rodlet structure. The chain is Class I hydrophobin 3 from Pisolithus tinctorius (Dead man's foot).